The chain runs to 158 residues: uncharacterized protein (158 aa).

This is an uncharacterized protein from Acidianus convivator (ABV).